The chain runs to 279 residues: Thymidylate synthase (279 aa).

Arginine 141–arginine 142 contributes to the dUMP binding site. Cysteine 161 acts as the Nucleophile in catalysis. DUMP-binding positions include arginine 181–aspartate 184, asparagine 192, and histidine 222–tyrosine 224. Aspartate 184 is a binding site for (6R)-5,10-methylene-5,6,7,8-tetrahydrofolate. Alanine 278 is a (6R)-5,10-methylene-5,6,7,8-tetrahydrofolate binding site.

The protein belongs to the thymidylate synthase family. Bacterial-type ThyA subfamily. As to quaternary structure, homodimer.

The protein resides in the cytoplasm. It catalyses the reaction dUMP + (6R)-5,10-methylene-5,6,7,8-tetrahydrofolate = 7,8-dihydrofolate + dTMP. It functions in the pathway pyrimidine metabolism; dTTP biosynthesis. Its function is as follows. Catalyzes the reductive methylation of 2'-deoxyuridine-5'-monophosphate (dUMP) to 2'-deoxythymidine-5'-monophosphate (dTMP) while utilizing 5,10-methylenetetrahydrofolate (mTHF) as the methyl donor and reductant in the reaction, yielding dihydrofolate (DHF) as a by-product. This enzymatic reaction provides an intracellular de novo source of dTMP, an essential precursor for DNA biosynthesis. This chain is Thymidylate synthase, found in Bacillus mojavensis.